A 368-amino-acid polypeptide reads, in one-letter code: Xaa-Pro dipeptidase (368 aa).

Mn(2+) is bound by residues Asp223, Asp234, His298, Glu327, and Glu341.

It belongs to the peptidase M24B family. Mn(2+) serves as cofactor.

The protein localises to the cytoplasm. It catalyses the reaction Xaa-L-Pro dipeptide + H2O = an L-alpha-amino acid + L-proline. In Lactobacillus helveticus (Lactobacillus suntoryeus), this protein is Xaa-Pro dipeptidase (pepQ).